We begin with the raw amino-acid sequence, 433 residues long: Cell adhesion molecule 2 (433 aa).

Positions 1-24 (MILQPSALLCLSSLWGVIVQASQG) are cleaved as a signal peptide. Residues 25 to 365 (QFPVTQNVTV…ALPGPVATDH (341 aa)) are Extracellular-facing. The region spanning 27–114 (PVTQNVTVVE…SLFTMPVKTS (88 aa)) is the Ig-like V-type domain. Residues Asn-31, Asn-41, and Asn-51 are each glycosylated (N-linked (GlcNAc...) asparagine). 3 cysteine pairs are disulfide-bonded: Cys-44-Cys-104, Cys-146-Cys-203, and Cys-248-Cys-296. Ig-like C2-type domains are found at residues 127–217 (PHIS…PQIA) and 227–312 (PTVR…YVLI). Residues Asn-287 and Asn-291 are each glycosylated (N-linked (GlcNAc...) asparagine). Residues 366-386 (ALIGGVVAVVVFVTLCSIILI) form a helical membrane-spanning segment. At 387–433 (GRYLARHKGTYLTNEAKGAEDAPDADTAIINAEGSQVNAEEKKEYFI) the chain is on the cytoplasmic side.

The protein belongs to the nectin family.

The protein resides in the membrane. The chain is Cell adhesion molecule 2 (cadm2) from Xenopus tropicalis (Western clawed frog).